The primary structure comprises 215 residues: Mediator of RNA polymerase II transcription subunit 8 (215 aa).

The stretch at 27-89 (LDALRMKFSQ…YEETLDATVA (63 aa)) forms a coiled coil.

It belongs to the Mediator complex subunit 8 family. As to quaternary structure, component of the Mediator complex.

The protein resides in the nucleus. Functionally, component of the Mediator complex, a coactivator involved in the regulated transcription of nearly all RNA polymerase II-dependent genes. Mediator functions as a bridge to convey information from gene-specific regulatory proteins to the basal RNA polymerase II transcription machinery. Mediator is recruited to promoters by direct interactions with regulatory proteins and serves as a scaffold for the assembly of a functional preinitiation complex with RNA polymerase II and the general transcription factors. The chain is Mediator of RNA polymerase II transcription subunit 8 (MED8) from Kluyveromyces lactis (strain ATCC 8585 / CBS 2359 / DSM 70799 / NBRC 1267 / NRRL Y-1140 / WM37) (Yeast).